Consider the following 124-residue polypeptide: V-type proton ATPase subunit F (124 aa).

The protein belongs to the V-ATPase F subunit family. As to quaternary structure, V-ATPase is a heteromultimeric enzyme composed of a peripheral catalytic V1 complex (components A to H) attached to an integral membrane V0 proton pore complex (components: a, c, c', c'', d, e, f and VOA1).

Its subcellular location is the vacuole membrane. Functionally, subunit of the V1 complex of vacuolar(H+)-ATPase (V-ATPase), a multisubunit enzyme composed of a peripheral complex (V1) that hydrolyzes ATP and a membrane integral complex (V0) that translocates protons. V-ATPase is responsible for acidifying and maintaining the pH of intracellular compartments. This Neurospora crassa (strain ATCC 24698 / 74-OR23-1A / CBS 708.71 / DSM 1257 / FGSC 987) protein is V-type proton ATPase subunit F (vma-7).